Reading from the N-terminus, the 283-residue chain is uncharacterized protein (283 aa).

An HTH rpiR-type domain is found at 3–79; that stretch reads TGGLAIIQSM…MRVAGDLAKP (77 aa). A DNA-binding region (H-T-H motif) is located at residues 39 to 58; that stretch reads VNEISALANSSDAAVIRLCK. The SIS domain occupies 123–264; that stretch reads AVSLLLKAHT…FLGMAAEQYE (142 aa).

This is an uncharacterized protein from Bacillus subtilis (strain 168).